We begin with the raw amino-acid sequence, 350 residues long: ATP-dependent (S)-NAD(P)H-hydrate dehydratase (350 aa).

Residues 35–342 (LMQSVKRIIP…PEVGRAYEEL (308 aa)) form the YjeF C-terminal domain. (6S)-NADPHX-binding positions include glycine 139 and 192–198 (NVAEFGR). ATP is bound by residues 230-234 (KGPVD) and 249-258 (GGLKRCGGQG). Aspartate 259 is a binding site for (6S)-NADPHX.

It belongs to the NnrD/CARKD family. Requires Mg(2+) as cofactor.

The protein localises to the cytoplasm. It catalyses the reaction (6S)-NADHX + ATP = ADP + phosphate + NADH + H(+). It carries out the reaction (6S)-NADPHX + ATP = ADP + phosphate + NADPH + H(+). In terms of biological role, catalyzes the dehydration of the S-form of NAD(P)HX at the expense of ATP, which is converted to ADP. Together with NAD(P)HX epimerase, which catalyzes the epimerization of the S- and R-forms, the enzyme allows the repair of both epimers of NAD(P)HX, a damaged form of NAD(P)H that is a result of enzymatic or heat-dependent hydration. This is ATP-dependent (S)-NAD(P)H-hydrate dehydratase from Mycosarcoma maydis (Corn smut fungus).